Reading from the N-terminus, the 248-residue chain is Triosephosphate isomerase (248 aa).

9-11 (NWK) is a substrate binding site. Histidine 94 (electrophile) is an active-site residue. Glutamate 166 acts as the Proton acceptor in catalysis. Residues glycine 172, serine 212, and 233-234 (GG) contribute to the substrate site.

This sequence belongs to the triosephosphate isomerase family. As to quaternary structure, homodimer.

It localises to the cytoplasm. The enzyme catalyses D-glyceraldehyde 3-phosphate = dihydroxyacetone phosphate. It functions in the pathway carbohydrate biosynthesis; gluconeogenesis. It participates in carbohydrate degradation; glycolysis; D-glyceraldehyde 3-phosphate from glycerone phosphate: step 1/1. Functionally, involved in the gluconeogenesis. Catalyzes stereospecifically the conversion of dihydroxyacetone phosphate (DHAP) to D-glyceraldehyde-3-phosphate (G3P). This chain is Triosephosphate isomerase, found in Thermoanaerobacter sp. (strain X514).